The chain runs to 63 residues: MNNKINNIKITQVKSAIGRKYDQRLTLVGLGLNKINKSVILENTNSIKGMVEKVKHLLKIENM.

Belongs to the universal ribosomal protein uL30 family. Part of the 50S ribosomal subunit.

In Rickettsia felis (strain ATCC VR-1525 / URRWXCal2) (Rickettsia azadi), this protein is Large ribosomal subunit protein uL30.